The sequence spans 183 residues: uncharacterized protein (183 aa).

This is an uncharacterized protein from Acanthamoeba polyphaga mimivirus (APMV).